Consider the following 428-residue polypeptide: Trigger factor (428 aa).

The PPIase FKBP-type domain maps to 163–248 (GDTAVIDFEG…INEVKAKELP (86 aa)).

It belongs to the FKBP-type PPIase family. Tig subfamily.

Its subcellular location is the cytoplasm. It carries out the reaction [protein]-peptidylproline (omega=180) = [protein]-peptidylproline (omega=0). Involved in protein export. Acts as a chaperone by maintaining the newly synthesized protein in an open conformation. Functions as a peptidyl-prolyl cis-trans isomerase. In Oceanobacillus iheyensis (strain DSM 14371 / CIP 107618 / JCM 11309 / KCTC 3954 / HTE831), this protein is Trigger factor.